The primary structure comprises 222 residues: Glutathione S-transferase A4 (222 aa).

The residue at position 1 (Met-1) is an N-acetylmethionine. The region spanning 3–83 (TKPKLHYPNG…YIADKHHLFG (81 aa)) is the GST N-terminal domain. Residues Tyr-9, 54-55 (QV), and 67-68 (QT) each bind glutathione. One can recognise a GST C-terminal domain in the interval 85–208 (DLKERTLIDM…EPGSKKKPPP (124 aa)).

Belongs to the GST superfamily. Alpha family. As to quaternary structure, homodimer.

It is found in the cytoplasm. It catalyses the reaction RX + glutathione = an S-substituted glutathione + a halide anion + H(+). Functionally, conjugation of reduced glutathione to a wide number of exogenous and endogenous hydrophobic electrophiles. In Bos taurus (Bovine), this protein is Glutathione S-transferase A4 (GSTA4).